Reading from the N-terminus, the 656-residue chain is Exoribonuclease 2 (656 aa).

Residues 190–518 (RSDLTKTPFF…LNHRLIKSVL (329 aa)) form the RNB domain. Positions 564–649 (KWRYKAEIFD…ESGQLIGKLA (86 aa)) constitute an S1 motif domain.

It belongs to the RNR ribonuclease family. RNase II subfamily.

It localises to the cytoplasm. It carries out the reaction Exonucleolytic cleavage in the 3'- to 5'-direction to yield nucleoside 5'-phosphates.. Involved in mRNA degradation. Hydrolyzes single-stranded polyribonucleotides processively in the 3' to 5' direction. The sequence is that of Exoribonuclease 2 from Psychromonas ingrahamii (strain DSM 17664 / CCUG 51855 / 37).